We begin with the raw amino-acid sequence, 378 residues long: MLKKLKDYRRIVVKIGSALLVDRATGLKRKWLESLGQDIAALQHAGVEVLVVSSGAIALGRTVLGLPKKALKLEESQAAAAAGQIALAKAYADVLGGHGIKSGQILVTLSDTEERRRYLNARATIETLLKLKAVPIINENDTVATTEIRYGDNDRLAARVATMMGADLLILLSDIDGLYTAPPHKNPDAQFLPFVETITPQIEAMAGAAASELSRGGMKTKLDAGKIANAAGTAMIITSGTRFGPLSAIDRGERATLFEAAHAPVNAWKTWISGNLEPAGRLTVDAGAVKALKSGKSLLPAGVKEVDGDFERGDTVAVMNEDGREIARGLIAYDAADARKVAGHKSDEISAILGYDARAAMIHRNDLVVRAASDAKAA.

K14 is a binding site for ATP. Substrate-binding residues include S54, D141, and N153. S173–D174 provides a ligand contact to ATP. Positions A279–D356 constitute a PUA domain.

This sequence belongs to the glutamate 5-kinase family.

It localises to the cytoplasm. It catalyses the reaction L-glutamate + ATP = L-glutamyl 5-phosphate + ADP. The protein operates within amino-acid biosynthesis; L-proline biosynthesis; L-glutamate 5-semialdehyde from L-glutamate: step 1/2. Functionally, catalyzes the transfer of a phosphate group to glutamate to form L-glutamate 5-phosphate. In Brucella abortus (strain S19), this protein is Glutamate 5-kinase.